Reading from the N-terminus, the 417-residue chain is Inner membrane transport protein YnfM (417 aa).

A disordered region spans residues Met-1 to Gln-22. Over Met-1–Thr-38 the chain is Periplasmic. The chain crosses the membrane as a helical span at residues Leu-39 to Leu-59. The Cytoplasmic portion of the chain corresponds to Pro-60–Ser-73. The chain crosses the membrane as a helical span at residues Ser-74 to Leu-94. Residues Ser-95–Lys-101 lie on the Periplasmic side of the membrane. A helical transmembrane segment spans residues Pro-102–Thr-122. Residues Ser-123–His-125 lie on the Cytoplasmic side of the membrane. Residues Gly-126–Met-146 traverse the membrane as a helical segment. The Periplasmic segment spans residues Thr-147–Glu-152. A helical transmembrane segment spans residues Ile-153–Gly-173. Over Met-174–Arg-190 the chain is Cytoplasmic. A helical membrane pass occupies residues Ile-191 to Leu-211. At Pro-212 to Pro-241 the chain is on the periplasmic side. The helical transmembrane segment at Leu-242–Gly-262 threads the bilayer. The Cytoplasmic segment spans residues Tyr-263–Arg-264. The helical transmembrane segment at Leu-265–Leu-285 threads the bilayer. Residues Thr-286–Leu-315 lie on the Periplasmic side of the membrane. The helical transmembrane segment at Phe-316–Phe-336 threads the bilayer. The Cytoplasmic portion of the chain corresponds to Ser-337–Ser-364. Residues Leu-365–Trp-385 traverse the membrane as a helical segment. At His-386–Asn-387 the chain is on the periplasmic side. The chain crosses the membrane as a helical span at residues Tyr-388–Gly-408. The Cytoplasmic segment spans residues Thr-409–Ala-417.

Belongs to the major facilitator superfamily.

Its subcellular location is the cell inner membrane. The sequence is that of Inner membrane transport protein YnfM (ynfM) from Escherichia coli (strain K12).